A 1706-amino-acid chain; its full sequence is Bifunctional hemolysin/adenylate cyclase (1706 aa).

The interval 1 to 399 is a, catalytic; sequence MQQSHQAGYA…RRPSLGAVER (399 aa). An ATP-binding site is contributed by 349–356; sequence AYGVAGKS. The interval 383 to 405 is disordered; it reads VPASPGLRRPSLGAVERQDSGYD. Residues 400–912 are b, Ala/Gly-rich; the sequence is QDSGYDSLDG…LKHSIKLDVI (513 aa). Residues 500–698 form a required for interaction with CyaC region; sequence LSAAVFGLGE…SVVGAPVAVV (199 aa). 2 N6-palmitoyl lysine lipidation sites follow: Lys860 and Lys983. Residues 913 to 1656 form a c region; it reads GGDGDDVVLA…RDADHRVEII (744 aa). 17 Hemolysin-type calcium-binding repeats span residues 1014–1031, 1032–1049, 1050–1067, 1155–1172, 1173–1190, 1279–1296, 1297–1314, 1315–1332, 1335–1352, 1411–1428, 1429–1446, 1447–1464, 1468–1484, 1537–1554, 1555–1572, 1573–1590, and 1603–1620; these read IGGA…DNFL, AGGS…NDTL, VGGE…DDVF, WGHD…DDIL, RGGL…NDIF, MGQG…DDLL, FGGD…NDTL, YGGL…NDWF, TQAR…VDTV, TGDA…ADVL, AGGE…DDQL, SGDA…DDWF, AANA…RDTV, IGDA…NDVL, SGGA…SDLL, SGDA…DDTY, and ESGG…ADQL. The d, Asp/Gly-rich stretch occupies residues 1657–1706; sequence HAANQAVDQAGIEKLVEAMAQYPDPGAAAAAPPAARVPDTLMQSLAVNWR.

It in the N-terminal section; belongs to the adenylyl cyclase class-2 family. This sequence in the C-terminal section; belongs to the RTX prokaryotic toxin family. Post-translationally, released in a processed form. Palmitoylated at Lys-860 and Lys-983 by CyaC. The toxin only becomes active when modified in position Lys-983: palmitoylation is required for efficient membrane insertion and pore formation of the acylated Hemolysin chain.

It is found in the secreted. It localises to the host cell membrane. It catalyses the reaction ATP = 3',5'-cyclic AMP + diphosphate. Activated by host calmodulin. Functionally, bifunctional adenylate cyclase toxin-hemolysin that plays a crucial role in host colonization. It causes whooping cough by acting on mammalian cells by elevating cAMP-concentration and thus disrupts normal cell function. In terms of biological role, adenylate cyclase that is activated by host intracellular calmodulin and catalyzes un-regulated conversion of ATP to cAMP, thereby impairing microbicidal functions of immune effector cells and inducing apoptosis of lung macrophages. Its function is as follows. Hemolysin that forms small cation-selective membrane channels, leading to hemolytic activity. The hemolytic activity of CyaA is weak compared with that of the HlyA of E.coli. The chain is Bifunctional hemolysin/adenylate cyclase (cya) from Bordetella pertussis (strain Tohama I / ATCC BAA-589 / NCTC 13251).